A 253-amino-acid chain; its full sequence is Small ribosomal subunit protein uS3 (253 aa).

The KH type-2 domain maps to 39–109; that stretch reads IRNYVLARLK…EVKIDVVEVI (71 aa). The interval 220 to 253 is disordered; the sequence is DEMKKMKDRRNDGGAKGRDSRDNRSKRRSRSKRS. Positions 221-242 are enriched in basic and acidic residues; that stretch reads EMKKMKDRRNDGGAKGRDSRDN. Over residues 243-253 the composition is skewed to basic residues; it reads RSKRRSRSKRS.

The protein belongs to the universal ribosomal protein uS3 family. As to quaternary structure, part of the 30S ribosomal subunit. Forms a tight complex with proteins S10 and S14.

Its function is as follows. Binds the lower part of the 30S subunit head. Binds mRNA in the 70S ribosome, positioning it for translation. This is Small ribosomal subunit protein uS3 from Chlorobium chlorochromatii (strain CaD3).